Consider the following 400-residue polypeptide: Subtilisin-like protease 11 (400 aa).

Residues 1 to 19 (MGLFTVVFTAIAALSAVDA) form the signal peptide. A propeptide spanning residues 20-117 (AELLRSPNSK…VEHDRYVYID (98 aa)) is cleaved from the precursor. Residues 35–116 (SYLVVMKDSV…FVEHDRYVYI (82 aa)) form the Inhibitor I9 domain. Residues 127–400 (SWGLGRVSHR…NKLLYNGSGQ (274 aa)) enclose the Peptidase S8 domain. Asparagine 138 is a glycosylation site (N-linked (GlcNAc...) asparagine). Active-site charge relay system residues include aspartate 159 and histidine 191. Asparagine 252, asparagine 336, and asparagine 337 each carry an N-linked (GlcNAc...) asparagine glycan. The active-site Charge relay system is the serine 346. N-linked (GlcNAc...) asparagine glycosylation is found at asparagine 388 and asparagine 396.

This sequence belongs to the peptidase S8 family.

Its subcellular location is the secreted. Secreted subtilisin-like serine protease with keratinolytic activity that contributes to pathogenicity. The protein is Subtilisin-like protease 11 (SUB11) of Arthroderma gypseum (strain ATCC MYA-4604 / CBS 118893) (Microsporum gypseum).